Here is an 80-residue protein sequence, read N- to C-terminus: Conotoxin Cl10.1 (80 aa).

Residues 1 to 20 form the signal peptide; sequence MTTLGMTMLVLLLLLPLATC. The propeptide occupies 21-36; the sequence is LGDGERSPWDSLLRAL.

Contains 4 disulfide bonds. As to expression, expressed by the venom duct.

Its subcellular location is the secreted. In Californiconus californicus (California cone), this protein is Conotoxin Cl10.1.